The sequence spans 366 residues: tRNA 2-selenouridine synthase (366 aa).

Residues 12–136 form the Rhodanese domain; the sequence is FLSGTPMMDV…MRGFLIDVIE (125 aa). Catalysis depends on Cys95, which acts as the S-selanylcysteine intermediate.

It belongs to the SelU family. In terms of assembly, monomer.

It carries out the reaction 5-methylaminomethyl-2-thiouridine(34) in tRNA + selenophosphate + (2E)-geranyl diphosphate + H2O + H(+) = 5-methylaminomethyl-2-selenouridine(34) in tRNA + (2E)-thiogeraniol + phosphate + diphosphate. The catalysed reaction is 5-methylaminomethyl-2-thiouridine(34) in tRNA + (2E)-geranyl diphosphate = 5-methylaminomethyl-S-(2E)-geranyl-thiouridine(34) in tRNA + diphosphate. The enzyme catalyses 5-methylaminomethyl-S-(2E)-geranyl-thiouridine(34) in tRNA + selenophosphate + H(+) = 5-methylaminomethyl-2-(Se-phospho)selenouridine(34) in tRNA + (2E)-thiogeraniol. It catalyses the reaction 5-methylaminomethyl-2-(Se-phospho)selenouridine(34) in tRNA + H2O = 5-methylaminomethyl-2-selenouridine(34) in tRNA + phosphate. In terms of biological role, involved in the post-transcriptional modification of the uridine at the wobble position (U34) of tRNA(Lys), tRNA(Glu) and tRNA(Gln). Catalyzes the conversion of 2-thiouridine (S2U-RNA) to 2-selenouridine (Se2U-RNA). Acts in a two-step process involving geranylation of 2-thiouridine (S2U) to S-geranyl-2-thiouridine (geS2U) and subsequent selenation of the latter derivative to 2-selenouridine (Se2U) in the tRNA chain. The sequence is that of tRNA 2-selenouridine synthase from Cupriavidus pinatubonensis (strain JMP 134 / LMG 1197) (Cupriavidus necator (strain JMP 134)).